The following is a 106-amino-acid chain: Immunoglobulin lambda constant 1 (106 aa).

Residues 7–101 form the Ig-like domain; sequence PTVTLFPPSS…EGSTVEKTVA (95 aa). An intrachain disulfide couples Cys28 to Cys87.

As to quaternary structure, immunoglobulins are composed of two identical heavy chains and two identical light chains; disulfide-linked.

The protein localises to the secreted. Its subcellular location is the cell membrane. Functionally, constant region of immunoglobulin light chains. Immunoglobulins, also known as antibodies, are membrane-bound or secreted glycoproteins produced by B lymphocytes. In the recognition phase of humoral immunity, the membrane-bound immunoglobulins serve as receptors which, upon binding of a specific antigen, trigger the clonal expansion and differentiation of B lymphocytes into immunoglobulins-secreting plasma cells. Secreted immunoglobulins mediate the effector phase of humoral immunity, which results in the elimination of bound antigens. The antigen binding site is formed by the variable domain of one heavy chain, together with that of its associated light chain. Thus, each immunoglobulin has two antigen binding sites with remarkable affinity for a particular antigen. The variable domains are assembled by a process called V-(D)-J rearrangement and can then be subjected to somatic hypermutations which, after exposure to antigen and selection, allow affinity maturation for a particular antigen. The protein is Immunoglobulin lambda constant 1 of Homo sapiens (Human).